We begin with the raw amino-acid sequence, 93 residues long: Aspartyl/glutamyl-tRNA(Asn/Gln) amidotransferase subunit C (93 aa).

The protein belongs to the GatC family. In terms of assembly, heterotrimer of A, B and C subunits.

The catalysed reaction is L-glutamyl-tRNA(Gln) + L-glutamine + ATP + H2O = L-glutaminyl-tRNA(Gln) + L-glutamate + ADP + phosphate + H(+). It carries out the reaction L-aspartyl-tRNA(Asn) + L-glutamine + ATP + H2O = L-asparaginyl-tRNA(Asn) + L-glutamate + ADP + phosphate + 2 H(+). Allows the formation of correctly charged Asn-tRNA(Asn) or Gln-tRNA(Gln) through the transamidation of misacylated Asp-tRNA(Asn) or Glu-tRNA(Gln) in organisms which lack either or both of asparaginyl-tRNA or glutaminyl-tRNA synthetases. The reaction takes place in the presence of glutamine and ATP through an activated phospho-Asp-tRNA(Asn) or phospho-Glu-tRNA(Gln). The sequence is that of Aspartyl/glutamyl-tRNA(Asn/Gln) amidotransferase subunit C from Rubrobacter xylanophilus (strain DSM 9941 / JCM 11954 / NBRC 16129 / PRD-1).